Here is a 513-residue protein sequence, read N- to C-terminus: MEDKEIGTPLPLPHSEARLQPTLVLTTLSAAFGSVFQYGYNIAVINTPHKVFKSFYNDTHFERHGTFMDESTLLLLWSCTVSMFPLGGLLGSLVVGLMVNKWGRKGTLLINNVFAITSAVLMGVSKVARAFELIILSRVLVGICAGIAYSTLPMYLGELAPQNLRGALGTMTEVFVIIGVLLAQIFSLQAILGNATGWPILLALTGVPAVIQLLSLPFFPESPRYTLIEKGDEETARQALRRLRGQNYNVEAEMEEMRTEERTEQAEGRLSVLNLFTFRPLRWQLISIVVLMAGQQLSGINAVNYYADVIYTSAGVDPTQSQYVTLGSGVINLVMTLVSAVIIERLGRRILLLSGYAICCSACLVLTVALLLQSTAPELSYLSIVCVFSYIVGHSIGPSPVPSVVRTEIVLQSSRTAAFTVDGAVHWLTNFIVGLTFPSIQVAIGAYSFLVFAGVCILTAAYIYVVIPETKGRTFVEINCAFAKRNGVEFPEEKEVATAKPHTPSLPTKETAF.

The Cytoplasmic segment spans residues 1–21 (MEDKEIGTPLPLPHSEARLQP). A helical transmembrane segment spans residues 22-42 (TLVLTTLSAAFGSVFQYGYNI). Residues 43 to 78 (AVINTPHKVFKSFYNDTHFERHGTFMDESTLLLLWS) lie on the Extracellular side of the membrane. Asparagine 57 carries an N-linked (GlcNAc...) asparagine glycan. A helical membrane pass occupies residues 79-99 (CTVSMFPLGGLLGSLVVGLMV). Residues 100–107 (NKWGRKGT) are Cytoplasmic-facing. The chain crosses the membrane as a helical span at residues 108 to 128 (LLINNVFAITSAVLMGVSKVA). Residues 129 to 138 (RAFELIILSR) lie on the Extracellular side of the membrane. Residues 139–159 (VLVGICAGIAYSTLPMYLGEL) form a helical membrane-spanning segment. The Cytoplasmic segment spans residues 160 to 172 (APQNLRGALGTMT). The helical transmembrane segment at 173 to 193 (EVFVIIGVLLAQIFSLQAILG) threads the bilayer. Topologically, residues 194-198 (NATGW) are extracellular. The helical transmembrane segment at 199-219 (PILLALTGVPAVIQLLSLPFF) threads the bilayer. Topologically, residues 220 to 282 (PESPRYTLIE…LNLFTFRPLR (63 aa)) are cytoplasmic. A helical transmembrane segment spans residues 283–303 (WQLISIVVLMAGQQLSGINAV). D-glucose is bound by residues 295-296 (QQ) and asparagine 301. Residues 304 to 322 (NYYADVIYTSAGVDPTQSQ) are Extracellular-facing. Residues 323 to 343 (YVTLGSGVINLVMTLVSAVII) traverse the membrane as a helical segment. Asparagine 332 is a binding site for D-glucose. Over 344-351 (ERLGRRIL) the chain is Cytoplasmic. A helical transmembrane segment spans residues 352–372 (LLSGYAICCSACLVLTVALLL). The Extracellular segment spans residues 373–380 (QSTAPELS). Residues 381 to 401 (YLSIVCVFSYIVGHSIGPSPV) traverse the membrane as a helical segment. At 402–416 (PSVVRTEIVLQSSRT) the chain is on the cytoplasmic side. A helical membrane pass occupies residues 417–437 (AAFTVDGAVHWLTNFIVGLTF). At 438-446 (PSIQVAIGA) the chain is on the extracellular side. The helical transmembrane segment at 447–467 (YSFLVFAGVCILTAAYIYVVI) threads the bilayer. Residues 468 to 513 (PETKGRTFVEINCAFAKRNGVEFPEEKEVATAKPHTPSLPTKETAF) are Cytoplasmic-facing. The interval 494 to 513 (KEVATAKPHTPSLPTKETAF) is disordered.

Belongs to the major facilitator superfamily. Sugar transporter (TC 2.A.1.1) family. Glucose transporter subfamily.

It localises to the cell membrane. It is found in the apical cell membrane. The catalysed reaction is D-glucose(out) = D-glucose(in). It carries out the reaction D-fructose(out) = D-fructose(in). Its function is as follows. Probable sugar transporter. Even if its physiological substrate is subject to discussion, it is able to transport glucose and fructose. Does not transport galactose, 2-deoxy-d-glucose and xylose. The chain is Solute carrier family 2, facilitated glucose transporter member 7 from Mus musculus (Mouse).